Here is a 232-residue protein sequence, read N- to C-terminus: N-(5'-phosphoribosyl)anthranilate isomerase (232 aa).

It belongs to the TrpF family.

The enzyme catalyses N-(5-phospho-beta-D-ribosyl)anthranilate = 1-(2-carboxyphenylamino)-1-deoxy-D-ribulose 5-phosphate. The protein operates within amino-acid biosynthesis; L-tryptophan biosynthesis; L-tryptophan from chorismate: step 3/5. The sequence is that of N-(5'-phosphoribosyl)anthranilate isomerase (TRP1) from Lipomyces starkeyi (Oleaginous yeast).